Consider the following 290-residue polypeptide: Light-independent protochlorophyllide reductase iron-sulfur ATP-binding protein (290 aa).

ATP is bound by residues 10 to 15 (GIGKST) and lysine 39. Mg(2+) is bound at residue serine 14. The [4Fe-4S] cluster site is built by cysteine 95 and cysteine 129. ATP is bound at residue 180 to 181 (NR).

The protein belongs to the NifH/BchL/ChlL family. Homodimer. Protochlorophyllide reductase is composed of three subunits; ChlL, ChlN and ChlB. Requires [4Fe-4S] cluster as cofactor.

The protein localises to the plastid. It is found in the chloroplast. The enzyme catalyses chlorophyllide a + oxidized 2[4Fe-4S]-[ferredoxin] + 2 ADP + 2 phosphate = protochlorophyllide a + reduced 2[4Fe-4S]-[ferredoxin] + 2 ATP + 2 H2O. It participates in porphyrin-containing compound metabolism; chlorophyll biosynthesis (light-independent). Its function is as follows. Component of the dark-operative protochlorophyllide reductase (DPOR) that uses Mg-ATP and reduced ferredoxin to reduce ring D of protochlorophyllide (Pchlide) to form chlorophyllide a (Chlide). This reaction is light-independent. The L component serves as a unique electron donor to the NB-component of the complex, and binds Mg-ATP. The protein is Light-independent protochlorophyllide reductase iron-sulfur ATP-binding protein of Pyropia yezoensis (Susabi-nori).